The chain runs to 334 residues: Pre-mRNA leakage protein 39 (334 aa).

Interacts with MLP1 and MLP2.

Its subcellular location is the nucleus membrane. Involved in the nuclear retention of improperly spliced pre-mRNAs. The protein is Pre-mRNA leakage protein 39 (PML39) of Saccharomyces cerevisiae (strain ATCC 204508 / S288c) (Baker's yeast).